Reading from the N-terminus, the 384-residue chain is MMCGFTSNPSPKKLLSKSSATNVHLEISPVKPDRPCKGYENVLGSCTTVAKCADLTDDLPVHNKENLLHGFNDLERHHDEENSSLQDSGYSSILQNDSPCQDETDSNVSDIQVRDTPKNLMQYQKPFHTLSTRCLPILRFEAAMCSTLKKMRKTSKKIDWNAVDDVVCGGNYGLEHLIGKSMGLERVDILAELFHRDFKHLLTKILRHLNAMDLINVIGVSTTWRKILQKDNWAYNTYKLGCKELCEKRAKVSTHTATRDESLCRVPLASVQKVAASSLCTSKKQNKNGGLSNNRHAEFIEVAQTLKNDQSLKACVDCGSPAKYDSYLHRAICTRESCKLDFCTLCSCKYHSSKSCLISKPRSYRIPIEPLPGSKKSKQNLRRL.

2 disordered regions span residues 1–20 (MMCG…KSSA) and 79–106 (DEEN…ETDS). Positions 9-19 (PSPKKLLSKSS) are enriched in low complexity. The span at 83 to 99 (SSLQDSGYSSILQNDSP) shows a compositional bias: polar residues. The F-box domain occupies 191–238 (AELFHRDFKHLLTKILRHLNAMDLINVIGVSTTWRKILQKDNWAYNTY). Residues 311–359 (SLKACVDCGSPAKYDSYLHRAICTRESCKLDFCTLCSCKYHSSKSCLIS) form a ZBR-type zinc finger. Residues Cys315, Cys318, Cys333, Cys338, Cys343, Cys346, His351, and Cys356 each contribute to the Zn(2+) site.

As to quaternary structure, part of a SCF (SKP1-cullin-F-box) protein ligase complex. Interacts with btrc. Interacts with skp1. Interacts with cdc20. Interacts with pin1; stabilizes fbxo5 by preventing its association with btrc in an isomerization-dependent pathway; this interaction is present during G2 phase and prevents fbxo5 degradation. Interacts with plk1. Proteolysed; proteolysis is induced by both cyclin B-cdk1 and cyclin A-cdk1/2 complex through probable phosphorylation. Proteolysis is inhibited by pin1 during G2.

Its subcellular location is the nucleus. It localises to the cytoplasm. It is found in the cytoskeleton. The protein resides in the spindle. The protein localises to the microtubule organizing center. Its subcellular location is the centrosome. The protein operates within protein modification; protein ubiquitination. Functionally, regulates progression through early mitosis by inhibiting the anaphase promoting complex/cyclosome (APC). Binds to the APC activators cdc20 to prevent APC activation. Can also bind directly to the APC to inhibit substrate-binding. Required to arrest unfertilized eggs at metaphase of meiosis II, by preventing their release from metaphase of meiosis II, through inhibition of APC-dependent cyclin B destruction leading to stabilization of cyclin B-cdk1 complex activity. The sequence is that of F-box only protein 5-B (fbxo5-b) from Xenopus laevis (African clawed frog).